The primary structure comprises 255 residues: Pyrroloquinoline-quinone synthase (255 aa).

Belongs to the PqqC family.

The enzyme catalyses 6-(2-amino-2-carboxyethyl)-7,8-dioxo-1,2,3,4,7,8-hexahydroquinoline-2,4-dicarboxylate + 3 O2 = pyrroloquinoline quinone + 2 H2O2 + 2 H2O + H(+). The protein operates within cofactor biosynthesis; pyrroloquinoline quinone biosynthesis. Ring cyclization and eight-electron oxidation of 3a-(2-amino-2-carboxyethyl)-4,5-dioxo-4,5,6,7,8,9-hexahydroquinoline-7,9-dicarboxylic-acid to PQQ. This Cereibacter sphaeroides (strain KD131 / KCTC 12085) (Rhodobacter sphaeroides) protein is Pyrroloquinoline-quinone synthase.